We begin with the raw amino-acid sequence, 200 residues long: Probable GTP-binding protein EngB (200 aa).

The EngB-type G domain occupies 22–199 (GLDEIALAGR…KDWIQARLYE (178 aa)). GTP is bound by residues 30–37 (GRSNVGKS), 57–61 (GKTQT), 78–81 (DVPG), 145–148 (TKMD), and 178–180 (FSS). Mg(2+)-binding residues include Ser37 and Thr59.

This sequence belongs to the TRAFAC class TrmE-Era-EngA-EngB-Septin-like GTPase superfamily. EngB GTPase family. The cofactor is Mg(2+).

Its function is as follows. Necessary for normal cell division and for the maintenance of normal septation. The protein is Probable GTP-binding protein EngB of Lactobacillus delbrueckii subsp. bulgaricus (strain ATCC 11842 / DSM 20081 / BCRC 10696 / JCM 1002 / NBRC 13953 / NCIMB 11778 / NCTC 12712 / WDCM 00102 / Lb 14).